The chain runs to 549 residues: Thermosome subunit (549 aa).

The span at 528–538 (EKEKEGEKGGG) shows a compositional bias: basic and acidic residues. Residues 528 to 549 (EKEKEGEKGGGSEEFSGSSDLD) are disordered. The span at 540–549 (EEFSGSSDLD) shows a compositional bias: low complexity.

It belongs to the TCP-1 chaperonin family. Forms an oligomeric complex of eight-membered rings.

Its function is as follows. Molecular chaperone; binds unfolded polypeptides in vitro, and has a weak ATPase activity. The chain is Thermosome subunit (ths) from Pyrococcus horikoshii (strain ATCC 700860 / DSM 12428 / JCM 9974 / NBRC 100139 / OT-3).